The following is a 116-amino-acid chain: Large ribosomal subunit protein uL22 (116 aa).

Belongs to the universal ribosomal protein uL22 family. In terms of assembly, part of the 50S ribosomal subunit.

Functionally, this protein binds specifically to 23S rRNA; its binding is stimulated by other ribosomal proteins, e.g. L4, L17, and L20. It is important during the early stages of 50S assembly. It makes multiple contacts with different domains of the 23S rRNA in the assembled 50S subunit and ribosome. Its function is as follows. The globular domain of the protein is located near the polypeptide exit tunnel on the outside of the subunit, while an extended beta-hairpin is found that lines the wall of the exit tunnel in the center of the 70S ribosome. The polypeptide is Large ribosomal subunit protein uL22 (Gloeobacter violaceus (strain ATCC 29082 / PCC 7421)).